The primary structure comprises 257 residues: Alcohol dehydrogenase 1 (257 aa).

Residue 9-33 coordinates NAD(+); that stretch reads VFVGGLGFIGYEACKTLITRDLASL. Serine 137 lines the substrate pocket. Tyrosine 150 acts as the Proton acceptor in catalysis.

It belongs to the short-chain dehydrogenases/reductases (SDR) family. Homodimer.

It carries out the reaction a primary alcohol + NAD(+) = an aldehyde + NADH + H(+). The catalysed reaction is a secondary alcohol + NAD(+) = a ketone + NADH + H(+). The polypeptide is Alcohol dehydrogenase 1 (ADH1) (Ceratitis cosyra (Mango fruit fly)).